The following is a 440-amino-acid chain: tRNA-2-methylthio-N(6)-dimethylallyladenosine synthase (440 aa).

The region spanning 5–121 (KKLYIKTYGC…LPEMEAKAGT (117 aa)) is the MTTase N-terminal domain. Residues cysteine 14, cysteine 50, cysteine 84, cysteine 159, cysteine 163, and cysteine 166 each coordinate [4Fe-4S] cluster. In terms of domain architecture, Radical SAM core spans 145–378 (AKRGPTAFLT…LTRQQREVQD (234 aa)). The region spanning 378–440 (DSMVGRELGV…ANSLAGELID (63 aa)) is the TRAM domain.

It belongs to the methylthiotransferase family. MiaB subfamily. Monomer. [4Fe-4S] cluster is required as a cofactor.

The protein localises to the cytoplasm. The catalysed reaction is N(6)-dimethylallyladenosine(37) in tRNA + (sulfur carrier)-SH + AH2 + 2 S-adenosyl-L-methionine = 2-methylsulfanyl-N(6)-dimethylallyladenosine(37) in tRNA + (sulfur carrier)-H + 5'-deoxyadenosine + L-methionine + A + S-adenosyl-L-homocysteine + 2 H(+). In terms of biological role, catalyzes the methylthiolation of N6-(dimethylallyl)adenosine (i(6)A), leading to the formation of 2-methylthio-N6-(dimethylallyl)adenosine (ms(2)i(6)A) at position 37 in tRNAs that read codons beginning with uridine. The protein is tRNA-2-methylthio-N(6)-dimethylallyladenosine synthase of Ruegeria sp. (strain TM1040) (Silicibacter sp.).